Reading from the N-terminus, the 227-residue chain is [D-Ala2]-deltorphins (227 aa).

The N-terminal stretch at 1-20 (MSFLKKSLLLVLFLGLVSHS) is a signal peptide. A propeptide spanning residues 21–46 (VCKEEKRETEEENENEEENHEVGSEM) is cleaved from the precursor. The disordered stretch occupies residues 22–227 (CKEEKRETEE…DVVGGEAKKM (206 aa)). The span at 30 to 39 (EEENENEEEN) shows a compositional bias: acidic residues. D-alanine (Ala) is present on Ala50. The propeptide occupies 57-75 (DTEEKNENEEENQEEGSEM). Over residues 62-72 (NENEEENQEEG) the composition is skewed to acidic residues. Positions 73–87 (SEMKRYAFGYPKREP) are enriched in basic and acidic residues. Position 79 is a D-alanine (Ala) (Ala79). Residues 86 to 104 (EPEEENENEEENHEEGSEM) constitute a propeptide that is removed on maturation. Positions 88-98 (EEENENEEENH) are enriched in acidic residues. Basic and acidic residues predominate over residues 99–108 (EEGSEMKRYA). Ala108 carries the D-alanine (Ala) modification. Gly113 is subject to Glycine amide. A propeptide spanning residues 115-140 (EAKKMKREPEEENENEEENHEEGSEM) is cleaved from the precursor. Over residues 124–134 (EEENENEEENH) the composition is skewed to acidic residues. Basic and acidic residues predominate over residues 135 to 144 (EEGSEMKRYA). The residue at position 144 (Ala144) is a D-alanine (Ala). Residue Gly149 is modified to Glycine amide. The propeptide occupies 151 to 176 (EAKKMKREPEEENENEEENHEEGSEM). Over residues 160–170 (EEENENEEENH) the composition is skewed to acidic residues. Residues 171–180 (EEGSEMKRYA) show a composition bias toward basic and acidic residues. Ala180 is subject to D-alanine (Ala). At Gly185 the chain carries Glycine amide. A propeptide spanning residues 187–212 (EAKKMKREPEEENENEEENHEEGSEM) is cleaved from the precursor. Over residues 196–206 (EEENENEEENH) the composition is skewed to acidic residues. Basic and acidic residues predominate over residues 207–216 (EEGSEMKRYA). Ala216 carries the post-translational modification D-alanine (Ala). Position 221 is a glycine amide (Gly221). A propeptide spanning residues 223 to 227 (EAKKM) is cleaved from the precursor.

It belongs to the frog skin active peptide (FSAP) family. Dermorphin subfamily. Expressed by the skin glands.

Its subcellular location is the secreted. Functionally, deltorphin is a heptapeptide with a very potent opiate-like activity. Has high affinity and selectivity for delta-type opioid receptors. The two dermorphin-like peptides have a similar affinity and selectivity for the mu opioid receptor as dermorphin. This is [D-Ala2]-deltorphins from Phyllomedusa bicolor (Two-colored leaf frog).